A 160-amino-acid polypeptide reads, in one-letter code: Sec-independent protein translocase protein TatB (160 aa).

A helical transmembrane segment spans residues 1–21 (MFGMGFFEILVVLVVAIIFLG). The tract at residues 118–160 (HLNEEVSNEEALNKEVSSDESPKEVQLATDNNTKEHDKEKENV) is disordered. 2 stretches are compositionally biased toward basic and acidic residues: residues 128-140 (ALNKEVSSDESPK) and 149-160 (NTKEHDKEKENV).

It belongs to the TatB family. The Tat system comprises two distinct complexes: a TatABC complex, containing multiple copies of TatA, TatB and TatC subunits, and a separate TatA complex, containing only TatA subunits. Substrates initially bind to the TatABC complex, which probably triggers association of the separate TatA complex to form the active translocon.

The protein resides in the cell inner membrane. In terms of biological role, part of the twin-arginine translocation (Tat) system that transports large folded proteins containing a characteristic twin-arginine motif in their signal peptide across membranes. Together with TatC, TatB is part of a receptor directly interacting with Tat signal peptides. TatB may form an oligomeric binding site that transiently accommodates folded Tat precursor proteins before their translocation. The protein is Sec-independent protein translocase protein TatB of Helicobacter pylori (strain ATCC 700392 / 26695) (Campylobacter pylori).